Here is a 439-residue protein sequence, read N- to C-terminus: Ribosomal protein uS12 methylthiotransferase RimO (439 aa).

The MTTase N-terminal domain maps to 7–119; it reads KQLCLISLGC…IDIMIAKKQN (113 aa). [4Fe-4S] cluster contacts are provided by Cys16, Cys50, Cys82, Cys151, Cys155, and Cys158. One can recognise a Radical SAM core domain in the interval 137–368; sequence TGSSVHAYVK…ALKHQNHSFK (232 aa).

It belongs to the methylthiotransferase family. RimO subfamily. The cofactor is [4Fe-4S] cluster.

The protein resides in the cytoplasm. The enzyme catalyses L-aspartate(89)-[ribosomal protein uS12]-hydrogen + (sulfur carrier)-SH + AH2 + 2 S-adenosyl-L-methionine = 3-methylsulfanyl-L-aspartate(89)-[ribosomal protein uS12]-hydrogen + (sulfur carrier)-H + 5'-deoxyadenosine + L-methionine + A + S-adenosyl-L-homocysteine + 2 H(+). Catalyzes the methylthiolation of an aspartic acid residue of ribosomal protein uS12. The polypeptide is Ribosomal protein uS12 methylthiotransferase RimO (Helicobacter pylori (strain P12)).